The primary structure comprises 266 residues: Dihydropteroate synthase (266 aa).

One can recognise a Pterin-binding domain in the interval 12–260 (AAIMGILNVT…DVKANQDIVA (249 aa)). Mg(2+) is bound at residue asparagine 19. (7,8-dihydropterin-6-yl)methyl diphosphate contacts are provided by residues threonine 59, aspartate 93, asparagine 112, aspartate 176, lysine 212, and 248 to 250 (RVH).

This sequence belongs to the DHPS family. Homodimer or homotrimer. The cofactor is Mg(2+).

It carries out the reaction (7,8-dihydropterin-6-yl)methyl diphosphate + 4-aminobenzoate = 7,8-dihydropteroate + diphosphate. It functions in the pathway cofactor biosynthesis; tetrahydrofolate biosynthesis; 7,8-dihydrofolate from 2-amino-4-hydroxy-6-hydroxymethyl-7,8-dihydropteridine diphosphate and 4-aminobenzoate: step 1/2. Catalyzes the condensation of para-aminobenzoate (pABA) with 6-hydroxymethyl-7,8-dihydropterin diphosphate (DHPt-PP) to form 7,8-dihydropteroate (H2Pte), the immediate precursor of folate derivatives. This Streptococcus pyogenes serotype M3 (strain ATCC BAA-595 / MGAS315) protein is Dihydropteroate synthase (folP).